The following is a 43-amino-acid chain: DeltaKappa-actitoxin-Avd4b (43 aa).

3 cysteine pairs are disulfide-bonded: C4–C39, C6–C32, and C22–C40.

It belongs to the sea anemone type 3 (BDS) potassium channel toxin family.

It localises to the secreted. It is found in the nematocyst. Acts as a gating modifier on both Kv and Nav ion channels. Voltage-dependently inhibits voltage-gated potassium channels Kv3 (Kv3.1/KCNC1, Kv3.2/KCNC2 and Kv3.4/KCNC4). Slows inactivation of the voltage-gated sodium channel Nav1.7/SCN9A. Inhibits all Kv3.1, Kv3.2 and Kv3.4 by about 50% when tested at a voltage of +40 mV. May act by binding residues in voltage-sensing domains S3b and S4 of Kv3. Tests have been done on human Nav1.7/SCN9A and rat SCG neurons that mostly carry Nav1.7 channels (EC(50)=300 nM). This toxin also reduces blood pressure. This is DeltaKappa-actitoxin-Avd4b from Anemonia sulcata (Mediterranean snakelocks sea anemone).